A 127-amino-acid polypeptide reads, in one-letter code: uncharacterized protein (127 aa).

Thr30 is modified (phosphothreonine). The interval 51-75 (APTYEQVLYPPASQKKTSNSTSEES) is disordered. A Phosphoserine modification is found at Ser63.

This is an uncharacterized protein from Mus musculus (Mouse).